The chain runs to 87 residues: Small ribosomal subunit protein eS21B (87 aa).

Residue M1 is modified to N-acetylmethionine.

Belongs to the eukaryotic ribosomal protein eS21 family. In terms of assembly, component of the small ribosomal subunit (SSU). Mature yeast ribosomes consist of a small (40S) and a large (60S) subunit. The 40S small subunit contains 1 molecule of ribosomal RNA (18S rRNA) and 33 different proteins (encoded by 57 genes). The large 60S subunit contains 3 rRNA molecules (25S, 5.8S and 5S rRNA) and 46 different proteins (encoded by 81 genes). N-terminally acetylated by acetyltransferase NatB.

Its subcellular location is the cytoplasm. Functionally, component of the ribosome, a large ribonucleoprotein complex responsible for the synthesis of proteins in the cell. The small ribosomal subunit (SSU) binds messenger RNAs (mRNAs) and translates the encoded message by selecting cognate aminoacyl-transfer RNA (tRNA) molecules. The large subunit (LSU) contains the ribosomal catalytic site termed the peptidyl transferase center (PTC), which catalyzes the formation of peptide bonds, thereby polymerizing the amino acids delivered by tRNAs into a polypeptide chain. The nascent polypeptides leave the ribosome through a tunnel in the LSU and interact with protein factors that function in enzymatic processing, targeting, and the membrane insertion of nascent chains at the exit of the ribosomal tunnel. eS21 is required for the processing of the 20S rRNA-precursor to mature 18S rRNA in a late step of the maturation of 40S ribosomal subunits. Has a physiological role leading to 18S rRNA stability. This Saccharomyces cerevisiae (strain ATCC 204508 / S288c) (Baker's yeast) protein is Small ribosomal subunit protein eS21B.